A 446-amino-acid chain; its full sequence is Serine decarboxylase 3 (446 aa).

A substrate-binding site is contributed by His-162. The residue at position 274 (Lys-274) is an N6-(pyridoxal phosphate)lysine.

This sequence belongs to the group II decarboxylase family. Requires pyridoxal 5'-phosphate as cofactor.

It catalyses the reaction L-serine + H(+) = ethanolamine + CO2. Its function is as follows. Catalyzes the biosynthesis of ethanolamine from serine. Decarboxylation of free serine is the major source of ethanolamine production in plants and ethanolamine metabolism is crucial for the synthesis of choline, phosphatidylethanolamine (PE) and phosphatidylcholine (PC), and thus for plant growth. This Oryza sativa subsp. japonica (Rice) protein is Serine decarboxylase 3.